We begin with the raw amino-acid sequence, 396 residues long: NADH-quinone oxidoreductase subunit D (396 aa).

This sequence belongs to the complex I 49 kDa subunit family. NDH-1 is composed of 14 different subunits. Subunits NuoB, C, D, E, F, and G constitute the peripheral sector of the complex.

It is found in the cell inner membrane. The enzyme catalyses a quinone + NADH + 5 H(+)(in) = a quinol + NAD(+) + 4 H(+)(out). Functionally, NDH-1 shuttles electrons from NADH, via FMN and iron-sulfur (Fe-S) centers, to quinones in the respiratory chain. The immediate electron acceptor for the enzyme in this species is believed to be ubiquinone. Couples the redox reaction to proton translocation (for every two electrons transferred, four hydrogen ions are translocated across the cytoplasmic membrane), and thus conserves the redox energy in a proton gradient. The chain is NADH-quinone oxidoreductase subunit D from Orientia tsutsugamushi (strain Ikeda) (Rickettsia tsutsugamushi).